The sequence spans 472 residues: MAPPVIEEYLGSRPSMERCVLLRAQRRNMTRVLNFDRKLFLSLVVKSRRRFFKKLGGSEKEIAARIEEYFSRQRRLEKLGQILTVLELQSVIVSEFTRTLGSLTTPTPAINAAVRRVDAPRARALASRALNSYAVLPPPEEAAPMARHKHSDLVEVVKRLVKEHLRRHNKRCVCYGSYALHLLNPEIEYGDIDMVQTNARPFLINLAFLIYFVTGRQTVLLRVPYLKNYVVLQDEEGGHILDSFNVRQATLRALPTLLVDNIYVLHPFVQLMAMLKMFSQTDRIRDLADNFDKARARMETLLAFALEELGEAPADGRTPLPCAFLPPEGGASRVLEADARALDCGFARAVVFLDEPALVQTLLDMGVQDDEIVDFESVSNSAFLVRDNTLFTYFSNTVLMDGDAVHDLSRRGVSAHIVMFLLLTRHPAAEGAVRSMLGSLVSDARPVTSVVERERKTGTHGVIDIAKNVITH.

Active-site residues include D191 and D193.

Belongs to the poxviridae poly(A) polymerase catalytic subunit family. In terms of assembly, heterodimer of a large (catalytic) subunit and a small (regulatory) subunit.

The enzyme catalyses RNA(n) + ATP = RNA(n)-3'-adenine ribonucleotide + diphosphate. Polymerase that creates the 3'-poly(A) tail of mRNA's. The sequence is that of Poly(A) polymerase catalytic subunit (PAPL) from Capra hircus (Goat).